The following is a 132-amino-acid chain: MAKGPNNAARARKKVKKNVADGIAHVHASFNNTIITITDRQGNALSWATAGGQGFKGSRKSTPFAAQVAAENAGRVAQDQGIKNLEVRIKGPGPGRESAVRALNALGIKIAIIEDVTPIPHNGCRPPKRRRI.

Belongs to the universal ribosomal protein uS11 family. As to quaternary structure, part of the 30S ribosomal subunit. Interacts with proteins S7 and S18. Binds to IF-3.

Its function is as follows. Located on the platform of the 30S subunit, it bridges several disparate RNA helices of the 16S rRNA. Forms part of the Shine-Dalgarno cleft in the 70S ribosome. This is Small ribosomal subunit protein uS11 from Cupriavidus pinatubonensis (strain JMP 134 / LMG 1197) (Cupriavidus necator (strain JMP 134)).